A 221-amino-acid chain; its full sequence is Iron-sulfur cluster repair protein YtfE (221 aa).

This sequence belongs to the RIC family. YtfE subfamily. In terms of assembly, homodimer.

The protein localises to the cytoplasm. Di-iron-containing protein involved in the repair of iron-sulfur clusters damaged by oxidative and nitrosative stress conditions. The protein is Iron-sulfur cluster repair protein YtfE of Pectobacterium atrosepticum (strain SCRI 1043 / ATCC BAA-672) (Erwinia carotovora subsp. atroseptica).